The primary structure comprises 429 residues: Probable M18 family aminopeptidase 2 (429 aa).

3 residues coordinate Zn(2+): His-82, His-156, and His-401.

It belongs to the peptidase M18 family. Zn(2+) is required as a cofactor.

The sequence is that of Probable M18 family aminopeptidase 2 from Pseudomonas aeruginosa (strain UCBPP-PA14).